Here is a 428-residue protein sequence, read N- to C-terminus: MPKEKPHVNIVFIGHVDHGKSTTIGRLLYDTGNIPETIIKKFEEMGEKGKSFKFAWVMDRLKEERERGITIDVAHTKFETPHRYITIIDAPGHRDFVKNMITGASQADAAVLVVAATDGVMPQTKEHAFLARTLGIKHIIVTINKMDMVNYDQKVFEKVKAQVEKLLRTLGYKDFPVIPTSAWNGDNIVKKSDKMPWYNGPTLIEALDQIPEPEKPVDKPLRIPIQDVYSIKGVGTVPVGRVETGKLKVGDVVIFEPASTIFHKPIQGEVKSIEMHHEPLQEALPGDNIGFNVRGVSKNDIKRGDVAGHPDKPPTVVRTKDTFKAQIIVLNHPTAITVGYSPVLHAHTAQVPVRFEQLLAKIDPRTGNITEENPQFIKTGDSAIVVLRPMKPVVLEPVKELPQLGRFAIRDMGMTIAAGMVISIQKGE.

The region spanning 5 to 217 is the tr-type G domain; that stretch reads KPHVNIVFIG…DQIPEPEKPV (213 aa). The interval 14–21 is G1; that stretch reads GHVDHGKS. 14-21 serves as a coordination point for GTP; the sequence is GHVDHGKS. Ser-21 contributes to the Mg(2+) binding site. Residues 68 to 72 form a G2 region; it reads GITID. The segment at 89 to 92 is G3; it reads DAPG. Residues 89 to 93 and 144 to 147 contribute to the GTP site; these read DAPGH and NKMD. Positions 144 to 147 are G4; the sequence is NKMD. The G5 stretch occupies residues 181 to 183; the sequence is SAW.

It belongs to the TRAFAC class translation factor GTPase superfamily. Classic translation factor GTPase family. EF-Tu/EF-1A subfamily.

Its subcellular location is the cytoplasm. The catalysed reaction is GTP + H2O = GDP + phosphate + H(+). Functionally, GTP hydrolase that promotes the GTP-dependent binding of aminoacyl-tRNA to the A-site of ribosomes during protein biosynthesis. In Pyrococcus abyssi (strain GE5 / Orsay), this protein is Elongation factor 1-alpha.